We begin with the raw amino-acid sequence, 264 residues long: Neuferricin (264 aa).

Residues 1–22 (MLRCGGRGLLLGLAVAAAAVMA) form the signal peptide. The region spanning 35-134 (FRLFIPEELS…KNYVCVGRVT (100 aa)) is the Cytochrome b5 heme-binding domain.

Belongs to the cytochrome b5 family. MAPR subfamily.

Its subcellular location is the secreted. In terms of biological role, heme-binding protein which promotes neuronal but not astrocyte differentiation. The sequence is that of Neuferricin from Homo sapiens (Human).